Reading from the N-terminus, the 775-residue chain is Hepatocyte growth factor-regulated tyrosine kinase substrate (775 aa).

Residues Ala-15–Pro-143 form the VHS domain. The FYVE-type zinc finger occupies Trp-160–Asn-220. Cys-166, Cys-169, Cys-182, Cys-185, Cys-190, and Cys-193 together coordinate Zn(2+). Lys-207 is subject to N6-acetyllysine. Residues Cys-212 and Cys-215 each contribute to the Zn(2+) site. At Tyr-216 the chain carries Phosphotyrosine. The interval Ala-223–Ala-319 is disordered. An interaction with SNX1 region spans residues Gly-225–Arg-541. The region spanning Gln-258–Lys-277 is the UIM domain. Residues Leu-307–Ala-316 show a composition bias toward polar residues. Phosphotyrosine is present on residues Tyr-308, Tyr-329, and Tyr-334. Residues Lys-338–Gln-405 form a disordered region. The segment at Ser-443 to Arg-541 is interaction with SNAP25 and TRAK2. The interaction with STAM stretch occupies residues Leu-452 to Ala-570. The interaction with NF2 stretch occupies residues Ala-478 to Asp-775. N6-succinyllysine is present on Lys-549. Low complexity predominate over residues Pro-640–Ala-657. 2 disordered regions span residues Pro-640 to Ser-690 and Gln-719 to Asp-775. Residues Tyr-658 to Ser-690 show a composition bias toward polar residues. The span at Thr-744–Gly-761 shows a compositional bias: pro residues.

Component of the ESCRT-0 complex composed of STAM or STAM2 and HGS. Part of a complex at least composed of HSG, STAM2 (or probably STAM) and EPS15. Interacts with STAM. Interacts with STAM2. Interacts with EPS15; the interaction is direct, calcium-dependent and inhibited by SNAP25. Identified in a complex with STAM and LITAF. Found in a complex with STAM and E3 ligase ITCH and DTX3L. Interacts with E3 ligase DTX3L; the interaction brings together STAM and HSG, promotes their recruitment to early endosomes and decreases STAM and HGS ubiquitination by ITCH. Interacts with NF2; the interaction is direct. Interacts with ubiquitin; the interaction is direct. Interacts with VPS37C. Interacts with SMAD1, SMAD2 and SMAD3. Interacts with TSG101; the interaction mediates the association with the ESCRT-I complex. Interacts with SNAP25; the interaction is direct and decreases with addition of increasing concentrations of free calcium. Interacts with SNX1; the interaction is direct. Component of a 550 kDa membrane complex at least composed of HGS and SNX1 but excluding EGFR. Interacts with TRAK1. Interacts with TRAK2. Component of the CART complex, at least composed of ACTN4, HGS/HRS, MYO5B and TRIM3. Interacts with ARRDC3. Identified in a complex containing at least ARRDC4, AVPR2 and HGS. Interacts (via UIM domain) with UBQLN1 (via ubiquitin-like domain). Interacts with LAPTM4B; promotes HGS ubiquitination. Phosphorylated on Tyr-334. This phosphorylation occurs in response to EGF. A minor site of phosphorylation on Tyr-329 is detected. Protein phosphorylation may also be triggered in response to IL-2, GM-CSF and HGF. In terms of processing, ubiquitinated by ITCH. In terms of tissue distribution, ubiquitous expression in adult and fetal tissues with higher expression in testis.

Its subcellular location is the cytoplasm. It is found in the early endosome membrane. It localises to the endosome. The protein localises to the multivesicular body membrane. In terms of biological role, involved in intracellular signal transduction mediated by cytokines and growth factors. When associated with STAM, it suppresses DNA signaling upon stimulation by IL-2 and GM-CSF. Could be a direct effector of PI3-kinase in vesicular pathway via early endosomes and may regulate trafficking to early and late endosomes by recruiting clathrin. May concentrate ubiquitinated receptors within clathrin-coated regions. Involved in down-regulation of receptor tyrosine kinase via multivesicular body (MVBs) when complexed with STAM (ESCRT-0 complex). The ESCRT-0 complex binds ubiquitin and acts as a sorting machinery that recognizes ubiquitinated receptors and transfers them to further sequential lysosomal sorting/trafficking processes. May contribute to the efficient recruitment of SMADs to the activin receptor complex. Involved in receptor recycling via its association with the CART complex, a multiprotein complex required for efficient transferrin receptor recycling but not for EGFR degradation. In Mus musculus (Mouse), this protein is Hepatocyte growth factor-regulated tyrosine kinase substrate (Hgs).